We begin with the raw amino-acid sequence, 413 residues long: Alpha-1-antitrypsin 1-5 (413 aa).

Positions 1–24 (MTPSISWCLLLLAGLCCLVPSFLA) are cleaved as a signal peptide. N64, N101, and N265 each carry an N-linked (GlcNAc...) asparagine glycan. The RCL stretch occupies residues 368–387 (AATVLQGGFLSMPPILHFNR).

This sequence belongs to the serpin family.

The protein resides in the secreted. Does not inhibit elastase or chymotrypsin. No target protease has been identified to date. The polypeptide is Alpha-1-antitrypsin 1-5 (Serpina1e) (Mus musculus (Mouse)).